We begin with the raw amino-acid sequence, 566 residues long: NAD-dependent malic enzyme (566 aa).

The active-site Proton donor is the Tyr104. Arg157 lines the NAD(+) pocket. The active-site Proton acceptor is Lys175. 3 residues coordinate a divalent metal cation: Glu246, Asp247, and Asp270. The NAD(+) site is built by Asp270 and Asn419.

It belongs to the malic enzymes family. As to quaternary structure, homotetramer. Mg(2+) is required as a cofactor. It depends on Mn(2+) as a cofactor.

It catalyses the reaction (S)-malate + NAD(+) = pyruvate + CO2 + NADH. It carries out the reaction oxaloacetate + H(+) = pyruvate + CO2. This chain is NAD-dependent malic enzyme, found in Cronobacter sakazakii (strain ATCC BAA-894) (Enterobacter sakazakii).